Consider the following 147-residue polypeptide: Effector TSP1 (147 aa).

The N-terminal stretch at 1 to 19 (MQITKTLVATLFAASTAFA) is a signal peptide. 2 disulfides stabilise this stretch: cysteine 44/cysteine 51 and cysteine 67/cysteine 87.

In terms of assembly, homodimer.

The protein resides in the secreted. Stimulates salicylic acid signaling in host plant roots. The sequence is that of Effector TSP1 from Hypocrea virens (strain Gv29-8 / FGSC 10586) (Gliocladium virens).